An 86-amino-acid chain; its full sequence is Progonadoliberin IIA (86 aa).

The N-terminal stretch at 1 to 24 is a signal peptide; that stretch reads MVHICRLFVVMGMLLCLSAQFASS. Position 25 is a pyrrolidone carboxylic acid (Q25). G34 is modified (glycine amide).

Belongs to the GnRH family. In terms of tissue distribution, olfactory bulbs, hypothalamus and telencephalon, midbrain and posterior brain areas.

It localises to the secreted. Its function is as follows. Stimulates the secretion of gonadotropins. This chain is Progonadoliberin IIA (gnrh2a), found in Carassius auratus (Goldfish).